The primary structure comprises 795 residues: Toll-like receptor 6 (795 aa).

Positions 1 to 27 (MSQDRKPIVGSFHFVCALALIVGSMTP) are cleaved as a signal peptide. Over 28–584 (FSNELESMVD…FHMSPLSCDT (557 aa)) the chain is Extracellular. An N-linked (GlcNAc...) asparagine glycan is attached at Asn42. LRR repeat units lie at residues 54–77 (TKAL…FLSE), 78–101 (LRVL…FNQD), 102–125 (LEYL…SLRH), 126–150 (LDLS…KLTF), 151–175 (LGLS…SCIL), 176–199 (LDLV…TTVL), 200–223 (HLVF…LGHL), 224–250 (QLSN…RGPT), 251–278 (LLNV…PRPV), 279–308 (EYLN…KSLM), 309–337 (IEHV…KMLS), 338–361 (ISDT…LNFT), 362–388 (QNVF…QRNG), 389–414 (LKNF…SLNS), 415–437 (LNSH…NLSS), 438–457 (NMLT…VLDL), 458–478 (HNNR…LQEL), 479–500 (NVAS…LSVL), and 501–524 (VIDH…IRSL). Asn114 carries an N-linked (GlcNAc...) asparagine glycan. A disulfide bridge links Cys117 with Cys139. An N-linked (GlcNAc...) asparagine glycan is attached at Asn144. N-linked (GlcNAc...) asparagine glycosylation is found at Asn195 and Asn214. Cys235 and Cys265 are disulfide-bonded. Asn253 and Asn285 each carry an N-linked (GlcNAc...) asparagine glycan. The cysteines at positions 348 and 373 are disulfide-linked. Residue Asn359 is glycosylated (N-linked (GlcNAc...) asparagine). 2 N-linked (GlcNAc...) asparagine glycosylation sites follow: Asn401 and Asn434. The cysteines at positions 424 and 447 are disulfide-linked. An LRRCT domain is found at 525-576 (TAGNNPFQCTCELRDFVKNIGWVAREVVEGWPDSYRCDYPESSKGTALRDFH). The chain crosses the membrane as a helical span at residues 585–605 (VLLTVTIGATMLVLAVTGAFL). Residues 606–795 (CLYFDLPWYV…ALVNEDDVKT (190 aa)) lie on the Cytoplasmic side of the membrane. One can recognise a TIR domain in the interval 640 to 781 (LQFHAFVSYS…LFWANLRASF (142 aa)).

Belongs to the Toll-like receptor family. In terms of assembly, homodimer (via cytoplasmic TIR domain). Heterodimer with TLR2 via their respective extracellular domains. Binds MYD88 via their respective TIR domains. Interacts with CD36, following CD36 stimulation by oxLDL or amyloid-beta 42, and forms a heterodimer with TLR4. The trimeric complex is internalized and triggers inflammatory response. LYN kinase activity facilitates TLR4:TLR6 heterodimerization and signal initiation. The heterodimer TLR2:TLR6 interacts with CD14 and CD36 in response to triacylated lipopeptides. As to expression, detected in thymus, spleen, ovary and lung. Expressed in macrohpages.

It localises to the cell membrane. It is found in the cytoplasmic vesicle. The protein localises to the phagosome membrane. The protein resides in the membrane raft. Its subcellular location is the golgi apparatus. Functionally, participates in the innate immune response to Gram-positive bacteria and fungi. Specifically recognizes diacylated and, to a lesser extent, triacylated lipopeptides. In response to diacylated lipopeptides, forms the activation cluster TLR2:TLR6:CD14:CD36, this cluster triggers signaling from the cell surface and subsequently is targeted to the Golgi in a lipid-raft dependent pathway. Acts via MYD88 and TRAF6, leading to NF-kappa-B activation, cytokine secretion and the inflammatory response. Recognizes mycoplasmal macrophage-activating lipopeptide-2kD (MALP-2), soluble tuberculosis factor (STF), phenol-soluble modulin (PSM) and B.burgdorferi outer surface protein A lipoprotein (OspA-L) cooperatively with TLR2. In complex with TLR4, promotes sterile inflammation in monocytes/macrophages in response to oxidized low-density lipoprotein (oxLDL) or amyloid-beta 42. In this context, the initial signal is provided by oxLDL- or amyloid-beta 42-binding to CD36. This event induces the formation of a heterodimer of TLR4 and TLR6, which is rapidly internalized and triggers inflammatory response, leading to the NF-kappa-B-dependent production of CXCL1, CXCL2 and CCL9 cytokines, via MYD88 signaling pathway, and CCL5 cytokine, via TICAM1 signaling pathway, as well as IL1B secretion. In Mus musculus (Mouse), this protein is Toll-like receptor 6 (Tlr6).